The primary structure comprises 145 residues: MIALIQRVTRASVTVEGEVTGEIGQGLLVLLGVERDDDEQKANRLCERVLGYRIFSDAEGKMNLNVQQAGGSVLVVSQFTLAADTERGMRPGFSRGAAPDRAEALYEYFVERCCQQEMNTQTGRFAADMQVSLVNDGPVTFWLQV.

A Gly-cisPro motif, important for rejection of L-amino acids motif is present at residues 137–138 (GP).

It belongs to the DTD family. As to quaternary structure, homodimer.

It localises to the cytoplasm. It carries out the reaction glycyl-tRNA(Ala) + H2O = tRNA(Ala) + glycine + H(+). The enzyme catalyses a D-aminoacyl-tRNA + H2O = a tRNA + a D-alpha-amino acid + H(+). In terms of biological role, an aminoacyl-tRNA editing enzyme that deacylates mischarged D-aminoacyl-tRNAs. Also deacylates mischarged glycyl-tRNA(Ala), protecting cells against glycine mischarging by AlaRS. Acts via tRNA-based rather than protein-based catalysis; rejects L-amino acids rather than detecting D-amino acids in the active site. By recycling D-aminoacyl-tRNA to D-amino acids and free tRNA molecules, this enzyme counteracts the toxicity associated with the formation of D-aminoacyl-tRNA entities in vivo and helps enforce protein L-homochirality. This Citrobacter koseri (strain ATCC BAA-895 / CDC 4225-83 / SGSC4696) protein is D-aminoacyl-tRNA deacylase.